The chain runs to 130 residues: Fluoride-specific ion channel FluC (130 aa).

4 helical membrane passes run 3 to 23 (FVFL…YFVG), 39 to 59 (GTFS…HLAV), 67 to 87 (FGIF…SYGL), and 102 to 122 (VSYA…GWFL). Positions 77 and 80 each coordinate Na(+).

Belongs to the fluoride channel Fluc/FEX (TC 1.A.43) family.

It localises to the cell inner membrane. It catalyses the reaction fluoride(in) = fluoride(out). Its activity is regulated as follows. Na(+) is not transported, but it plays an essential structural role and its presence is essential for fluoride channel function. Its function is as follows. Fluoride-specific ion channel. Important for reducing fluoride concentration in the cell, thus reducing its toxicity. In Helicobacter pylori (strain ATCC 700392 / 26695) (Campylobacter pylori), this protein is Fluoride-specific ion channel FluC.